The following is a 641-amino-acid chain: Chaperone protein DnaK (641 aa).

Threonine 199 is modified (phosphothreonine; by autocatalysis). The disordered stretch occupies residues 603–627 (YGQQQAEGGAQAAGAAGGSSKADDA). Low complexity predominate over residues 604–616 (GQQQAEGGAQAAG).

The protein belongs to the heat shock protein 70 family.

Acts as a chaperone. The polypeptide is Chaperone protein DnaK (Azoarcus sp. (strain BH72)).